Consider the following 132-residue polypeptide: Small ribosomal subunit protein uS8 (132 aa).

The protein belongs to the universal ribosomal protein uS8 family. In terms of assembly, part of the 30S ribosomal subunit. Contacts proteins S5 and S12.

In terms of biological role, one of the primary rRNA binding proteins, it binds directly to 16S rRNA central domain where it helps coordinate assembly of the platform of the 30S subunit. The protein is Small ribosomal subunit protein uS8 of Syntrophomonas wolfei subsp. wolfei (strain DSM 2245B / Goettingen).